The following is a 251-amino-acid chain: Protein unc-119 homolog B (251 aa).

The disordered stretch occupies residues 1-28 (MSGSNPKAAAAASAAGPGGLVAGKEEKK). Ser2 carries the post-translational modification N-acetylserine. Residue Lys24 is modified to N6-acetyllysine. Position 142 (Tyr142) interacts with tetradecanoate.

The protein belongs to the PDE6D/unc-119 family. In terms of assembly, found in a complex with ARL3, RP2 and UNC119B; RP2 induces hydrolysis of GTP ARL3 in the complex, leading to the release of UNC119B. Interacts with NPHP3 (when myristoylated). Interacts with CYS1 (when myristoylated). Interacts with MACIR; interaction only takes place when UNC119B is not liganded with myristoylated proteins.

Its subcellular location is the cell projection. The protein localises to the cilium. Its function is as follows. Myristoyl-binding protein that acts as a cargo adapter: specifically binds the myristoyl moiety of a subset of N-terminally myristoylated proteins and is required for their localization. Binds myristoylated NPHP3 and plays a key role in localization of NPHP3 to the primary cilium membrane. Does not bind all myristoylated proteins. Probably plays a role in trafficking proteins in photoreceptor cells. The chain is Protein unc-119 homolog B (UNC119B) from Homo sapiens (Human).